Reading from the N-terminus, the 94-residue chain is Signal peptidase complex subunit 1 (94 aa).

Ser2 carries the N-acetylserine modification. The Cytoplasmic portion of the chain corresponds to 2-28 (SEILQDVQRKLVFPIDFPSQRKTEKFQ). Residues 29–49 (QLSLMIGALVACILGFAQQSL) traverse the membrane as a helical segment. Residue Lys50 is a topological domain, lumenal. A helical membrane pass occupies residues 51 to 71 (VLLTAYGISCVITLICVLPAY). Residues 72-94 (PWYNKQKLRWAQPKIEINVDQYD) are Cytoplasmic-facing.

It belongs to the SPCS1 family. As to quaternary structure, component of the signal peptidase complex (SPC) composed of a catalytic subunit SEC11 and three accessory subunits SPC1, SPC2 and SPC3. The complex induces a local thinning of the ER membrane which is used to measure the length of the signal peptide (SP) h-region of protein substrates. This ensures the selectivity of the complex towards h-regions shorter than 18-20 amino acids. SPC associates with the translocon complex. Interacts with SBH1 and SEB2/SBH2.

The protein localises to the endoplasmic reticulum membrane. Component of the signal peptidase complex (SPC) which catalyzes the cleavage of N-terminal signal sequences from nascent proteins as they are translocated into the lumen of the endoplasmic reticulum. Dispensable for SPC enzymatic activity. The protein is Signal peptidase complex subunit 1 (SPC1) of Saccharomyces cerevisiae (strain ATCC 204508 / S288c) (Baker's yeast).